The following is a 210-amino-acid chain: Leucyl/phenylalanyl-tRNA--protein transferase (210 aa).

It belongs to the L/F-transferase family.

It is found in the cytoplasm. It catalyses the reaction N-terminal L-lysyl-[protein] + L-leucyl-tRNA(Leu) = N-terminal L-leucyl-L-lysyl-[protein] + tRNA(Leu) + H(+). The enzyme catalyses N-terminal L-arginyl-[protein] + L-leucyl-tRNA(Leu) = N-terminal L-leucyl-L-arginyl-[protein] + tRNA(Leu) + H(+). The catalysed reaction is L-phenylalanyl-tRNA(Phe) + an N-terminal L-alpha-aminoacyl-[protein] = an N-terminal L-phenylalanyl-L-alpha-aminoacyl-[protein] + tRNA(Phe). Functionally, functions in the N-end rule pathway of protein degradation where it conjugates Leu, Phe and, less efficiently, Met from aminoacyl-tRNAs to the N-termini of proteins containing an N-terminal arginine or lysine. This is Leucyl/phenylalanyl-tRNA--protein transferase from Ruegeria pomeroyi (strain ATCC 700808 / DSM 15171 / DSS-3) (Silicibacter pomeroyi).